The primary structure comprises 332 residues: Glycerol-3-phosphate dehydrogenase [NAD(P)+] (332 aa).

3 residues coordinate NADPH: W13, K34, and K108. Residues K108, G136, and S138 each coordinate sn-glycerol 3-phosphate. Residue A140 coordinates NADPH. 5 residues coordinate sn-glycerol 3-phosphate: K191, D244, S254, R255, and N256. The Proton acceptor role is filled by K191. R255 serves as a coordination point for NADPH. NADPH is bound by residues V279 and E281.

It belongs to the NAD-dependent glycerol-3-phosphate dehydrogenase family.

It is found in the cytoplasm. The catalysed reaction is sn-glycerol 3-phosphate + NAD(+) = dihydroxyacetone phosphate + NADH + H(+). The enzyme catalyses sn-glycerol 3-phosphate + NADP(+) = dihydroxyacetone phosphate + NADPH + H(+). Its pathway is membrane lipid metabolism; glycerophospholipid metabolism. Its function is as follows. Catalyzes the reduction of the glycolytic intermediate dihydroxyacetone phosphate (DHAP) to sn-glycerol 3-phosphate (G3P), the key precursor for phospholipid synthesis. The polypeptide is Glycerol-3-phosphate dehydrogenase [NAD(P)+] (Francisella tularensis subsp. mediasiatica (strain FSC147)).